The chain runs to 645 residues: UPF0313 protein CLK_3381 (645 aa).

Positions 295 to 566 (AIKEVKFSIT…RMQRALLQFS (272 aa)) constitute a Radical SAM core domain. Positions 309, 313, and 316 each coordinate [4Fe-4S] cluster. Positions 598 to 645 (NKPYKKSHKKNNVKNNNNHYNKNNNYNKNKDVSKKNKKNSLSKHKKRK) are disordered. The span at 600-609 (PYKKSHKKNN) shows a compositional bias: basic residues. The span at 610-624 (VKNNNNHYNKNNNYN) shows a compositional bias: low complexity. A compositionally biased stretch (basic residues) spans 632 to 645 (KNKKNSLSKHKKRK).

Belongs to the UPF0313 family. Requires [4Fe-4S] cluster as cofactor.

In Clostridium botulinum (strain Loch Maree / Type A3), this protein is UPF0313 protein CLK_3381.